The primary structure comprises 279 residues: Methyltransferase ausD (279 aa).

S-adenosyl-L-methionine is bound by residues 124-125 (DI) and 152-153 (DV).

It belongs to the class I-like SAM-binding methyltransferase superfamily. In terms of assembly, homodimer.

The protein operates within secondary metabolite biosynthesis; terpenoid biosynthesis. Methyltransferase; part of the gene cluster A that mediates the biosynthesis of the fungal meroterpenoid acetoxydehydroaustin. The first step of the pathway is the synthesis of 3,5-dimethylorsellinic acid by the polyketide synthase ausA. 3,5-dimethylorsellinic acid is then prenylated by the polyprenyl transferase ausN. Further epoxidation by the FAD-dependent monooxygenase ausM and cyclization by the probable terpene cyclase ausL lead to the formation of protoaustinoid A. Protoaustinoid A is then oxidized to spiro-lactone preaustinoid A3 by the combined action of the FAD-binding monooxygenases ausB and ausC, and the dioxygenase ausE. Acid-catalyzed keto-rearrangement and ring contraction of the tetraketide portion of preaustinoid A3 by ausJ lead to the formation of preaustinoid A4. The aldo-keto reductase ausK, with the help of ausH, is involved in the next step by transforming preaustinoid A4 into isoaustinone which is in turn hydroxylated by the P450 monooxygenase ausI to form austinolide. The cytochrome P450 monooxygenase ausG then modifies austinolide to austinol. Austinol is further acetylated to austin by the O-acetyltransferase ausP, which spontaneously changes to dehydroaustin. The cytochrome P450 monooxygenase then converts dehydroaustin is into 7-dehydrodehydroaustin. The hydroxylation catalyzed by ausR permits the second O-acetyltransferase ausQ to add an additional acetyl group to the molecule, leading to the formation of acetoxydehydroaustin. Due to genetic rearrangements of the clusters and the subsequent loss of some enzymes, the end product of the Penicillium brasilianum austinoid biosynthesis clusters is acetoxydehydroaustin. The protein is Methyltransferase ausD of Penicillium brasilianum.